Here is a 388-residue protein sequence, read N- to C-terminus: Succinate--CoA ligase [ADP-forming] subunit beta (388 aa).

The ATP-grasp domain maps to 9–245; sequence KALLKEYGMP…KSQENERELK (237 aa). Residues K46, 53-55, E100, Y103, and E108 contribute to the ATP site; that span reads GRG. Mg(2+) is bound by residues N200 and D214. Residues N265 and 322–324 contribute to the substrate site; that span reads GIV.

The protein belongs to the succinate/malate CoA ligase beta subunit family. Heterotetramer of two alpha and two beta subunits. Requires Mg(2+) as cofactor.

It carries out the reaction succinate + ATP + CoA = succinyl-CoA + ADP + phosphate. The enzyme catalyses GTP + succinate + CoA = succinyl-CoA + GDP + phosphate. Its pathway is carbohydrate metabolism; tricarboxylic acid cycle; succinate from succinyl-CoA (ligase route): step 1/1. Succinyl-CoA synthetase functions in the citric acid cycle (TCA), coupling the hydrolysis of succinyl-CoA to the synthesis of either ATP or GTP and thus represents the only step of substrate-level phosphorylation in the TCA. The beta subunit provides nucleotide specificity of the enzyme and binds the substrate succinate, while the binding sites for coenzyme A and phosphate are found in the alpha subunit. The protein is Succinate--CoA ligase [ADP-forming] subunit beta of Acinetobacter baumannii (strain AB307-0294).